A 186-amino-acid chain; its full sequence is Ribosome maturation factor RimP (186 aa).

Belongs to the RimP family.

The protein resides in the cytoplasm. In terms of biological role, required for maturation of 30S ribosomal subunits. This Rhizorhabdus wittichii (strain DSM 6014 / CCUG 31198 / JCM 15750 / NBRC 105917 / EY 4224 / RW1) (Sphingomonas wittichii) protein is Ribosome maturation factor RimP.